Here is a 284-residue protein sequence, read N- to C-terminus: MEMO1 family protein MMP1387 (284 aa).

The protein belongs to the MEMO1 family.

This Methanococcus maripaludis (strain DSM 14266 / JCM 13030 / NBRC 101832 / S2 / LL) protein is MEMO1 family protein MMP1387.